The following is a 509-amino-acid chain: Protein OS-9 homolog (509 aa).

An N-terminal signal peptide occupies residues 1 to 23 (MRRQSRIVASLLVLACASSGAFA). Positions 64 to 74 (SPDLNDISEQT) are enriched in polar residues. Positions 64-91 (SPDLNDISEQTPLKDESEESIRDGSSGE) are disordered. Basic and acidic residues predominate over residues 75–91 (PLKDESEESIRDGSSGE). N-linked (GlcNAc...) asparagine glycosylation is present at Asn120. Residues 151-291 (GKCLYYISGW…LIYTPRLCND (141 aa)) enclose the MRH domain. An intrachain disulfide couples Cys153 to Cys166. The a mannooligosaccharide derivative site is built by Trp160, Trp161, Gln173, Asp246, Arg252, Glu273, and Tyr279. 2 disulfide bridges follow: Cys245/Cys277 and Cys260/Cys289. The disordered stretch occupies residues 433-509 (GVVDTDEDEE…GSEEIFKDEL (77 aa)). Residues 436–451 (DTDEDEEDGYENEEGE) are compositionally biased toward acidic residues. A compositionally biased stretch (basic and acidic residues) spans 452–461 (TDKREQRENT). The span at 489 to 502 (RSEDGEDPDVDGSE) shows a compositional bias: acidic residues. Positions 506 to 509 (KDEL) match the Prevents secretion from ER motif.

This sequence belongs to the OS-9 family. In terms of assembly, interacts with missfolded ER lumenal proteins.

The protein resides in the endoplasmic reticulum membrane. Functionally, lectin involved in the quality control of the secretory pathway. As a member of the endoplasmic reticulum-associated degradation lumenal (ERAD-L) surveillance system, targets misfolded endoplasmic reticulum lumenal glycoproteins for degradation. The polypeptide is Protein OS-9 homolog (yos9) (Emericella nidulans (strain FGSC A4 / ATCC 38163 / CBS 112.46 / NRRL 194 / M139) (Aspergillus nidulans)).